The chain runs to 159 residues: 2-C-methyl-D-erythritol 2,4-cyclodiphosphate synthase (159 aa).

A divalent metal cation is bound by residues Asp10 and His12. Residues 10–12 (DVH) and 36–37 (HS) contribute to the 4-CDP-2-C-methyl-D-erythritol 2-phosphate site. Residue His44 coordinates a divalent metal cation. 4-CDP-2-C-methyl-D-erythritol 2-phosphate-binding positions include 58-60 (DIG), 63-67 (FPDTD), 102-108 (AQAPKMA), 134-137 (TTTE), Phe141, 141-144 (FTGR), and Arg144.

It belongs to the IspF family. In terms of assembly, homotrimer. The cofactor is a divalent metal cation.

It carries out the reaction 4-CDP-2-C-methyl-D-erythritol 2-phosphate = 2-C-methyl-D-erythritol 2,4-cyclic diphosphate + CMP. Its pathway is isoprenoid biosynthesis; isopentenyl diphosphate biosynthesis via DXP pathway; isopentenyl diphosphate from 1-deoxy-D-xylulose 5-phosphate: step 4/6. In terms of biological role, involved in the biosynthesis of isopentenyl diphosphate (IPP) and dimethylallyl diphosphate (DMAPP), two major building blocks of isoprenoid compounds. Catalyzes the conversion of 4-diphosphocytidyl-2-C-methyl-D-erythritol 2-phosphate (CDP-ME2P) to 2-C-methyl-D-erythritol 2,4-cyclodiphosphate (ME-CPP) with a corresponding release of cytidine 5-monophosphate (CMP). The sequence is that of 2-C-methyl-D-erythritol 2,4-cyclodiphosphate synthase from Shewanella oneidensis (strain ATCC 700550 / JCM 31522 / CIP 106686 / LMG 19005 / NCIMB 14063 / MR-1).